A 256-amino-acid polypeptide reads, in one-letter code: Hydroxyacylglutathione hydrolase (256 aa).

Residues His-57, His-59, Asp-61, His-62, His-115, Asp-134, and His-172 each contribute to the Zn(2+) site.

It belongs to the metallo-beta-lactamase superfamily. Glyoxalase II family. As to quaternary structure, monomer. Zn(2+) serves as cofactor.

The enzyme catalyses an S-(2-hydroxyacyl)glutathione + H2O = a 2-hydroxy carboxylate + glutathione + H(+). Its pathway is secondary metabolite metabolism; methylglyoxal degradation; (R)-lactate from methylglyoxal: step 2/2. Thiolesterase that catalyzes the hydrolysis of S-D-lactoyl-glutathione to form glutathione and D-lactic acid. In Rhizobium meliloti (strain 1021) (Ensifer meliloti), this protein is Hydroxyacylglutathione hydrolase.